A 482-amino-acid chain; its full sequence is Nucleoside triphosphate pyrophosphatase/Nudix hydrolase fusion protein (482 aa).

Residues 1 to 299 form a maf-like region; that stretch reads MSIPLILASK…DLWNVGRGEL (299 aa). The Proton acceptor role is filled by Asp-167. A Nudix hydrolase domain is found at 338–475; it reads GTNGASGILL…TDWPRFAARL (138 aa).

The protein in the N-terminal section; belongs to the Maf family. It depends on a divalent metal cation as a cofactor.

It is found in the cytoplasm. The catalysed reaction is a ribonucleoside 5'-triphosphate + H2O = a ribonucleoside 5'-phosphate + diphosphate + H(+). It carries out the reaction a 2'-deoxyribonucleoside 5'-triphosphate + H2O = a 2'-deoxyribonucleoside 5'-phosphate + diphosphate + H(+). In terms of biological role, nucleoside triphosphate pyrophosphatase. May have a dual role in cell division arrest and in preventing the incorporation of modified nucleotides into cellular nucleic acids. In Bifidobacterium longum (strain NCC 2705), this protein is Nucleoside triphosphate pyrophosphatase/Nudix hydrolase fusion protein.